The following is a 746-amino-acid chain: Polyribonucleotide nucleotidyltransferase (746 aa).

Mg(2+) contacts are provided by Asp515 and Asp521. Residues 581-640 enclose the KH domain; the sequence is PRVIAVKIPVDKIGEVIGPKGKMINQIQEDTGADISIEDDGTVYIGATNGPSADAARSAI. One can recognise an S1 motif domain in the interval 652–724; sequence GERYLGTVVK…DRGKLSLSPV (73 aa).

This sequence belongs to the polyribonucleotide nucleotidyltransferase family. The cofactor is Mg(2+).

Its subcellular location is the cytoplasm. It catalyses the reaction RNA(n+1) + phosphate = RNA(n) + a ribonucleoside 5'-diphosphate. Its function is as follows. Involved in mRNA degradation. Catalyzes the phosphorolysis of single-stranded polyribonucleotides processively in the 3'- to 5'-direction. In Renibacterium salmoninarum (strain ATCC 33209 / DSM 20767 / JCM 11484 / NBRC 15589 / NCIMB 2235), this protein is Polyribonucleotide nucleotidyltransferase.